The sequence spans 368 residues: 3-isopropylmalate dehydrogenase (368 aa).

79–91 contributes to the NAD(+) binding site; that stretch reads GPEWGTSSTVRPE. Residues Arg-98, Arg-108, Arg-137, and Asp-226 each coordinate substrate. Mg(2+) is bound by residues Asp-226, Asp-251, and Asp-255. 291–303 contacts NAD(+); sequence GSAPDISGKGIVN.

The protein belongs to the isocitrate and isopropylmalate dehydrogenases family. Homodimer. It depends on Mg(2+) as a cofactor. Mn(2+) is required as a cofactor.

The protein localises to the cytoplasm. It catalyses the reaction (2R,3S)-3-isopropylmalate + NAD(+) = 4-methyl-2-oxopentanoate + CO2 + NADH. It participates in amino-acid biosynthesis; L-leucine biosynthesis; L-leucine from 3-methyl-2-oxobutanoate: step 3/4. In terms of biological role, catalyzes the oxidation of 3-carboxy-2-hydroxy-4-methylpentanoate (3-isopropylmalate) to 3-carboxy-4-methyl-2-oxopentanoate. The product decarboxylates to 4-methyl-2 oxopentanoate. This Sordaria macrospora protein is 3-isopropylmalate dehydrogenase (LEU1).